The primary structure comprises 385 residues: Na(+)/H(+) antiporter NhaA (385 aa).

The next 11 membrane-spanning stretches (helical) occupy residues 9 to 29, 45 to 65, 87 to 107, 114 to 134, 155 to 175, 198 to 218, 220 to 235, 245 to 265, 282 to 302, 312 to 332, and 345 to 365; these read YSAIFLLCSAALAIIFANVLD, IFGLITPHDIVADFLLAVFFF, IIPGVCAAGGILVPISIYLSV, GWPVPTATDVAFSLGILAIFG, AGIVIIATAFSVSISYWWIIV, TFLIIPAMLLCALAAWVSVYQ, GIHATIAGVMLGIMLN, ALEPYINGIILPAFAFLAAMV, ILLGLLFGKLLGISVFGIIAL, FFNLLVVSALGGIGFTVSLLM, and QGVIAVLIGSLLSAILAIILM.

The protein belongs to the NhaA Na(+)/H(+) (TC 2.A.33) antiporter family.

It localises to the cell membrane. It catalyses the reaction Na(+)(in) + 2 H(+)(out) = Na(+)(out) + 2 H(+)(in). Functionally, na(+)/H(+) antiporter that extrudes sodium in exchange for external protons. The chain is Na(+)/H(+) antiporter NhaA from Tropheryma whipplei (strain TW08/27) (Whipple's bacillus).